The primary structure comprises 513 residues: ABC transporter H family member 2 (513 aa).

In terms of domain architecture, ABC transporter spans 39–280 (LTMKNIHKTY…EHYQKLYKEC (242 aa)). 75 to 82 (GTSGGGKT) serves as a coordination point for ATP. Residues 291 to 471 (VTSVFKNDDD…SSSYSNNNNN (181 aa)) form a disordered region. Low complexity predominate over residues 324–360 (SYNNNNSNLNNNSNSNSNNNSNNNNSKNYASSSSSSS). The span at 361-386 (VLNGKLSQSTVNNSSIYNHNNDSPFF) shows a compositional bias: polar residues. Low complexity predominate over residues 387 to 471 (NSNNNNNINN…SSSYSNNNNN (85 aa)).

The protein belongs to the ABC transporter superfamily.

The protein is ABC transporter H family member 2 (abcH2) of Dictyostelium discoideum (Social amoeba).